We begin with the raw amino-acid sequence, 127 residues long: Protein ApaG (127 aa).

The region spanning 3-127 (NERKYSIKVE…FILSVPRVLH (125 aa)) is the ApaG domain.

The chain is Protein ApaG from Nitrosomonas europaea (strain ATCC 19718 / CIP 103999 / KCTC 2705 / NBRC 14298).